A 293-amino-acid chain; its full sequence is Mating-type protein A-1 (293 aa).

The segment at residues 42-97 (AAKKKVNGFMGFRSYYSPLFSQLPQKERSPFMTILWQHDPFHNEWDFMCSVYSSIR) is a DNA-binding region (alpha box).

It belongs to the MATALPHA1 family.

It localises to the nucleus. In terms of biological role, mating type proteins are sequence specific DNA-binding proteins that act as master switches in yeast differentiation by controlling gene expression in a cell type-specific fashion. Transcriptional activator that induces the transcription of A-specific genes like mating factor ccg-4. Required for mating as an A-cell and for blocking of heterokaryon formation (vegetative incompatibility). The chain is Mating-type protein A-1 (mtA-1) from Neurospora crassa (strain ATCC 24698 / 74-OR23-1A / CBS 708.71 / DSM 1257 / FGSC 987).